The primary structure comprises 369 residues: Anhydro-N-acetylmuramic acid kinase (369 aa).

12 to 19 (GTSMDGID) contacts ATP.

The protein belongs to the anhydro-N-acetylmuramic acid kinase family.

The enzyme catalyses 1,6-anhydro-N-acetyl-beta-muramate + ATP + H2O = N-acetyl-D-muramate 6-phosphate + ADP + H(+). Its pathway is amino-sugar metabolism; 1,6-anhydro-N-acetylmuramate degradation. It functions in the pathway cell wall biogenesis; peptidoglycan recycling. Functionally, catalyzes the specific phosphorylation of 1,6-anhydro-N-acetylmuramic acid (anhMurNAc) with the simultaneous cleavage of the 1,6-anhydro ring, generating MurNAc-6-P. Is required for the utilization of anhMurNAc either imported from the medium or derived from its own cell wall murein, and thus plays a role in cell wall recycling. In Shewanella sediminis (strain HAW-EB3), this protein is Anhydro-N-acetylmuramic acid kinase.